Consider the following 1544-residue polypeptide: Lysophospholipase NTE1 (1544 aa).

The Cytoplasmic portion of the chain corresponds to 1-37; that stretch reads MSTIEIVSTVAEYTEIHSPVSSKFLLPSARDSSSSIS. A helical transmembrane segment spans residues 38–58; the sequence is LFSAIFWFWSWLFFKIMNIFL. At 59 to 76 the chain is on the lumenal side; the sequence is YYIPNIIVNLFSVNFQIT. A helical transmembrane segment spans residues 77 to 97; it reads LSLSSIVITLTGIISFCFLIV. Residues 98 to 1544 are Cytoplasmic-facing; that stretch reads RYKYLTRYSK…RKSLYRRSSI (1447 aa). 2 disordered regions span residues 265-312 and 424-552; these read RLFS…RNYP and ESPS…EETE. Residues 275–310 are compositionally biased toward polar residues; it reads NPASNPLSPDNTGSKSFDPLSSGNFNDTSLSSSDRN. A compositionally biased stretch (low complexity) spans 425 to 447; that stretch reads SPSVSINKTSSSSSSLPKKSTTS. 2 stretches are compositionally biased toward polar residues: residues 448–458 and 517–536; these read LRPLNRNQSSR and QISS…TTKF. Positions 537 to 546 are enriched in basic and acidic residues; it reads ENIRDRTFSD. A nucleoside 3',5'-cyclic phosphate-binding positions include 681–811 and 807–960; these read SFES…LKSL and KLKS…VANK. One can recognise a PNPLA domain in the interval 1237-1401; sequence LVLGGGGSRG…LDNLPVMEMK (165 aa). The GXGXXG motif lies at 1241–1246; sequence GGGSRG. Residues 1268–1272 carry the GXSXG motif; it reads GTSIG. Residue Ser1270 is the Nucleophile of the active site. Catalysis depends on Asp1388, which acts as the Proton acceptor. Positions 1388–1390 match the DGA/G motif; it reads DGG.

Belongs to the NTE family.

It is found in the endoplasmic reticulum membrane. The catalysed reaction is a 1-acyl-sn-glycero-3-phosphocholine + H2O = sn-glycerol 3-phosphocholine + a fatty acid + H(+). With respect to regulation, inhibited by organophosphorus esters. In terms of biological role, intracellular phospholipase B that catalyzes the double deacylation of phosphatidylcholine (PC) to glycerophosphocholine (GroPCho). Plays an important role in membrane lipid homeostasis. Responsible for the rapid PC turnover in response to inositol, elevated temperatures, or when choline is present in the growth medium. In Debaryomyces hansenii (strain ATCC 36239 / CBS 767 / BCRC 21394 / JCM 1990 / NBRC 0083 / IGC 2968) (Yeast), this protein is Lysophospholipase NTE1 (NTE1).